The chain runs to 1147 residues: Nitric oxide synthase, inducible (1147 aa).

Residues 22–51 (KDINNNVEKTPGAIPSPTTQDDPKSHKHQN) are disordered. Residues 23–27 (DINNN) carry the DINNN-motif; mediates interaction with SPSB1, SPSB2 and SPSB4 motif. 2 residues coordinate Zn(2+): Cys107 and Cys112. Ser115 provides a ligand contact to (6R)-L-erythro-5,6,7,8-tetrahydrobiopterin. Cys197 serves as a coordination point for heme b. L-arginine contacts are provided by Gln260, Trp369, Tyr370, and Glu374. (6R)-L-erythro-5,6,7,8-tetrahydrobiopterin contacts are provided by Arg378, Ile459, Trp460, and Phe473. Tyr488 serves as a coordination point for heme b. The segment at 512 to 532 (FTVLVKAVFFASVLMRKVMAS) is calmodulin-binding. The Flavodoxin-like domain maps to 536-674 (ATVLFATETG…AFRSWAVQTF (139 aa)). FMN is bound by residues Thr542, Glu543, Thr544, Lys546, and Ser547. Thr564 carries the phosphothreonine modification. Tyr572 bears the Phosphotyrosine mark. Ser588, Thr589, Ser625, Cys632, Glu658, and Gln662 together coordinate FMN. In terms of domain architecture, FAD-binding FR-type spans 727-967 (KNVFTMRLKS…VRSVSGFQLP (241 aa)). Arg747 serves as a coordination point for NADP(+). Positions 769, 903, 905, 906, 921, and 923 each coordinate FAD. Residue Thr926 coordinates NADP(+). Residues Tyr927, Val940, Cys941, and Ser942 each coordinate FAD. 8 residues coordinate NADP(+): Thr981, Arg1014, Ser1043, Arg1044, Lys1050, Tyr1052, Gln1054, and Asp1087.

It belongs to the NOS family. In terms of assembly, homodimer. Interacts with NHERF1. Interacts with GAPDH; induced by oxidatively-modified low-densitity lipoprotein (LDL(ox)). Interacts with S100A8 and S100A9 to form the iNOS-S100A8/9 transnitrosylase complex. Interacts with SPSB1, SPSB2 and SPSB4. Interacts with ELOC and CUL5 in the presence of SPSB1 or SPSB2 or SPSB4. Forms a complex with ASL, ASS1 and HSP90AA1; the complex regulates cell-autonomous L-arginine synthesis and citrulline recycling while channeling extracellular L-arginine to nitric oxide synthesis pathway. Heme b serves as cofactor. Requires FAD as cofactor. The cofactor is FMN. It depends on (6R)-L-erythro-5,6,7,8-tetrahydrobiopterin as a cofactor. Post-translationally, polyubiquitinated; mediated by SPSB1, SPSB2 and SPSB4, leading to proteasomal degradation. In terms of tissue distribution, in normal kidney, expressed primarily in the medullary thick ascending limb, with minor amounts in the medullary collecting duct and vasa recta bundle.

It localises to the cytoplasm. The protein localises to the cytosol. It catalyses the reaction 2 L-arginine + 3 NADPH + 4 O2 + H(+) = 2 L-citrulline + 2 nitric oxide + 3 NADP(+) + 4 H2O. Not stimulated by calcium/calmodulin. Aspirin inhibits expression and function of this enzyme and effects may be exerted at the level of translational/post-translational modification and directly on the catalytic activity. Its function is as follows. Produces nitric oxide (NO) which is a messenger molecule with diverse functions throughout the body. In macrophages, NO mediates tumoricidal and bactericidal actions. Also has nitrosylase activity and mediates cysteine S-nitrosylation of cytoplasmic target proteins such PTGS2/COX2. As component of the iNOS-S100A8/9 transnitrosylase complex involved in the selective inflammatory stimulus-dependent S-nitrosylation of GAPDH implicated in regulation of the GAIT complex activity and probably multiple targets including ANXA5, EZR, MSN and VIM. Involved in inflammation, enhances the synthesis of pro-inflammatory mediators such as IL6 and IL8. In Rattus norvegicus (Rat), this protein is Nitric oxide synthase, inducible (Nos2).